The chain runs to 372 residues: Queuine tRNA-ribosyltransferase (372 aa).

The active-site Proton acceptor is aspartate 89. Substrate is bound by residues 89–93 (DSGGF), aspartate 161, and glycine 232. The interval 262–268 (GIGDLPS) is RNA binding. Residue aspartate 281 is the Nucleophile of the active site. Positions 286–290 (TKAAR) are RNA binding; important for wobble base 34 recognition. 4 residues coordinate Zn(2+): cysteine 319, cysteine 321, cysteine 324, and histidine 351.

It belongs to the queuine tRNA-ribosyltransferase family. In terms of assembly, homodimer. Within each dimer, one monomer is responsible for RNA recognition and catalysis, while the other monomer binds to the replacement base PreQ1. The cofactor is Zn(2+).

The enzyme catalyses 7-aminomethyl-7-carbaguanine + guanosine(34) in tRNA = 7-aminomethyl-7-carbaguanosine(34) in tRNA + guanine. The protein operates within tRNA modification; tRNA-queuosine biosynthesis. Functionally, catalyzes the base-exchange of a guanine (G) residue with the queuine precursor 7-aminomethyl-7-deazaguanine (PreQ1) at position 34 (anticodon wobble position) in tRNAs with GU(N) anticodons (tRNA-Asp, -Asn, -His and -Tyr). Catalysis occurs through a double-displacement mechanism. The nucleophile active site attacks the C1' of nucleotide 34 to detach the guanine base from the RNA, forming a covalent enzyme-RNA intermediate. The proton acceptor active site deprotonates the incoming PreQ1, allowing a nucleophilic attack on the C1' of the ribose to form the product. After dissociation, two additional enzymatic reactions on the tRNA convert PreQ1 to queuine (Q), resulting in the hypermodified nucleoside queuosine (7-(((4,5-cis-dihydroxy-2-cyclopenten-1-yl)amino)methyl)-7-deazaguanosine). The sequence is that of Queuine tRNA-ribosyltransferase from Chlamydia caviae (strain ATCC VR-813 / DSM 19441 / 03DC25 / GPIC) (Chlamydophila caviae).